We begin with the raw amino-acid sequence, 495 residues long: Phytochrome A type 5 (495 aa).

Positions 1–21 (MSSSRPASSSSSRNRQSSQAR) are enriched in low complexity. Residues 1 to 24 (MSSSRPASSSSSRNRQSSQARVLA) form a disordered region. The GAF domain occupies 217 to 402 (SMEMLCNTVV…VFAVHVNREF (186 aa)). Cys-322 is a binding site for phytochromobilin.

It belongs to the phytochrome family. Homodimer. In terms of processing, contains one covalently linked phytochromobilin chromophore.

Functionally, regulatory photoreceptor which exists in two forms that are reversibly interconvertible by light: the Pr form that absorbs maximally in the red region of the spectrum and the Pfr form that absorbs maximally in the far-red region. Photoconversion of Pr to Pfr induces an array of morphogenic responses, whereas reconversion of Pfr to Pr cancels the induction of those responses. Pfr controls the expression of a number of nuclear genes including those encoding the small subunit of ribulose-bisphosphate carboxylase, chlorophyll A/B binding protein, protochlorophyllide reductase, rRNA, etc. It also controls the expression of its own gene(s) in a negative feedback fashion. In Avena sativa (Oat), this protein is Phytochrome A type 5 (PHYA5).